Reading from the N-terminus, the 187-residue chain is ATP synthase subunit b, chloroplastic (187 aa).

A helical transmembrane segment spans residues 34–56 (LINLAAVIGLLFYSGRSFLTNLL).

This sequence belongs to the ATPase B chain family. F-type ATPases have 2 components, F(1) - the catalytic core - and F(0) - the membrane proton channel. F(1) has five subunits: alpha(3), beta(3), gamma(1), delta(1), epsilon(1). F(0) has four main subunits: a(1), b(1), b'(1) and c(10-14). The alpha and beta chains form an alternating ring which encloses part of the gamma chain. F(1) is attached to F(0) by a central stalk formed by the gamma and epsilon chains, while a peripheral stalk is formed by the delta, b and b' chains.

It is found in the plastid. The protein resides in the chloroplast thylakoid membrane. In terms of biological role, f(1)F(0) ATP synthase produces ATP from ADP in the presence of a proton or sodium gradient. F-type ATPases consist of two structural domains, F(1) containing the extramembraneous catalytic core and F(0) containing the membrane proton channel, linked together by a central stalk and a peripheral stalk. During catalysis, ATP synthesis in the catalytic domain of F(1) is coupled via a rotary mechanism of the central stalk subunits to proton translocation. Functionally, component of the F(0) channel, it forms part of the peripheral stalk, linking F(1) to F(0). The sequence is that of ATP synthase subunit b, chloroplastic from Chlorokybus atmophyticus (Soil alga).